The following is a 513-amino-acid chain: 2-isopropylmalate synthase (513 aa).

One can recognise a Pyruvate carboxyltransferase domain in the interval 7 to 269 (VYIFDTTLRD…TTGIVTEELF (263 aa)). Asp-16, His-204, His-206, and Asn-240 together coordinate Mn(2+). Residues 393–513 (ALQFLSVHCG…KEEERTCPQL (121 aa)) are regulatory domain.

The protein belongs to the alpha-IPM synthase/homocitrate synthase family. LeuA type 1 subfamily. In terms of assembly, homodimer. Mn(2+) is required as a cofactor.

It localises to the cytoplasm. It catalyses the reaction 3-methyl-2-oxobutanoate + acetyl-CoA + H2O = (2S)-2-isopropylmalate + CoA + H(+). It functions in the pathway amino-acid biosynthesis; L-leucine biosynthesis; L-leucine from 3-methyl-2-oxobutanoate: step 1/4. Its function is as follows. Catalyzes the condensation of the acetyl group of acetyl-CoA with 3-methyl-2-oxobutanoate (2-ketoisovalerate) to form 3-carboxy-3-hydroxy-4-methylpentanoate (2-isopropylmalate). In Solidesulfovibrio magneticus (strain ATCC 700980 / DSM 13731 / RS-1) (Desulfovibrio magneticus), this protein is 2-isopropylmalate synthase.